A 288-amino-acid chain; its full sequence is tRNA dimethylallyltransferase (288 aa).

17–24 (GPTASGKS) lines the ATP pocket. Position 19 to 24 (19 to 24 (TASGKS)) interacts with substrate.

Belongs to the IPP transferase family. In terms of assembly, monomer. Mg(2+) serves as cofactor.

It carries out the reaction adenosine(37) in tRNA + dimethylallyl diphosphate = N(6)-dimethylallyladenosine(37) in tRNA + diphosphate. Its function is as follows. Catalyzes the transfer of a dimethylallyl group onto the adenine at position 37 in tRNAs that read codons beginning with uridine, leading to the formation of N6-(dimethylallyl)adenosine (i(6)A). This is tRNA dimethylallyltransferase from Ruegeria sp. (strain TM1040) (Silicibacter sp.).